A 592-amino-acid chain; its full sequence is Calnexin (592 aa).

A signal peptide spans 1–20 (MEGKWLLCMLLVLGTAIVEA). Topologically, residues 21–481 (HDGHDDDVID…QMIEAAEERP (461 aa)) are lumenal. 2 residues coordinate Ca(2+): serine 74 and aspartate 117. Residue lysine 137 is modified to N6-acetyllysine. Cysteine 160 and cysteine 194 form a disulfide bridge. An alpha-D-glucoside is bound by residues tyrosine 164, lysine 166, tyrosine 185, and aspartate 192. Positions 260-345 (GNLLNDMTPP…AEKPEDWDED (86 aa)) are disordered. Residues 274-319 (REIEDPEDRKPEDWDERPKIPDPEAVKPDDWDEDAPAKIPDEEATK) show a composition bias toward basic and acidic residues. The p domain (Extended arm) stretch occupies residues 276 to 409 (IEDPEDRKPE…RKIPNPDFFE (134 aa)). Tandem repeats lie at residues 278–290 (DPED…WDER), 295–307 (DPEA…WDED), 314–326 (DEEA…WLDD), 333–345 (DPDA…WDED), and 348–358 (GEWEAPQIANP). 2 4 X approximate repeats regions span residues 278–345 (DPED…WDED) and 348–405 (GEWE…IPNP). The segment covering 323–345 (WLDDEPEYVPDPDAEKPEDWDED) has biased composition (acidic residues). The interaction with PPIB stretch occupies residues 326–359 (DEPEYVPDPDAEKPEDWDEDMDGEWEAPQIANPK). Cysteines 360 and 366 form a disulfide. 3 repeat units span residues 367 to 377 (GVWQRPMIDNP), 381 to 391 (GKWKPPMIDNP), and 395 to 405 (GIWKPRKIPNP). Glutamate 425 lines the an alpha-D-glucoside pocket. Aspartate 436 is a binding site for Ca(2+). The chain crosses the membrane as a helical span at residues 482-502 (WLWVVYILTVALPVFLVILFC). S-palmitoyl cysteine attachment occurs at residues cysteine 502 and cysteine 503. The Cytoplasmic portion of the chain corresponds to 503 to 592 (CSGKKQTSAM…SPRNRKPRRE (90 aa)). The segment at 503–592 (CSGKKQTSAM…SPRNRKPRRE (90 aa)) is sufficient to mediate interaction with SGIP1. The tract at residues 511–592 (AMEYKKTDAP…SPRNRKPRRE (82 aa)) is disordered. Positions 525–547 (KEEEEEKEEEKDKGDEEEEGEEK) are enriched in acidic residues. Serine 554 carries the post-translational modification Phosphoserine. At threonine 562 the chain carries Phosphothreonine. Serine 564 bears the Phosphoserine; by MAPK3 mark. Serine 583 is subject to Phosphoserine.

Belongs to the calreticulin family. As to quaternary structure, interacts with MAPK3/ERK1. Interacts with KCNH2. Associates with ribosomes. Interacts with SGIP1; involved in negative regulation of endocytosis. The palmitoylated form interacts with the ribosome-translocon complex component SSR1, promoting efficient folding of glycoproteins. Interacts with SERPINA2P/SERPINA2 and with the S and Z variants of SERPINA1. Interacts with PPIB. Interacts with ZNRF4. Interacts with SMIM22. Interacts with TMX2. Interacts with TMEM35A/NACHO and CHRNA7. Interacts with reticulophagy regulators RETREG2 and RETREG3. Interacts with DNM1L; may form part of a larger protein complex at the ER-mitochondrial interface during mitochondrial fission. Interacts with ADAM7. Phosphorylated at Ser-564 by MAPK3/ERK1. Phosphorylation by MAPK3/ERK1 increases its association with ribosomes. Post-translationally, palmitoylation by DHHC6 leads to the preferential localization to the perinuclear rough ER. It mediates the association of calnexin with the ribosome-translocon complex (RTC) which is required for efficient folding of glycosylated proteins. In terms of processing, ubiquitinated, leading to proteasomal degradation. Probably ubiquitinated by ZNRF4.

The protein resides in the endoplasmic reticulum membrane. Its subcellular location is the mitochondrion membrane. It localises to the melanosome membrane. Functionally, calcium-binding protein that interacts with newly synthesized monoglucosylated glycoproteins in the endoplasmic reticulum. It may act in assisting protein assembly and/or in the retention within the ER of unassembled protein subunits. It seems to play a major role in the quality control apparatus of the ER by the retention of incorrectly folded proteins. Associated with partial T-cell antigen receptor complexes that escape the ER of immature thymocytes, it may function as a signaling complex regulating thymocyte maturation. Additionally it may play a role in receptor-mediated endocytosis at the synapse. The protein is Calnexin (CANX) of Pongo abelii (Sumatran orangutan).